The primary structure comprises 129 residues: Serum amyloid A-2 protein (129 aa).

The signal sequence occupies residues 1–18 (MKLFTGLIFCSLVLGVSS). Gln-19 carries the pyrrolidone carboxylic acid modification. The interval 92–129 (GDSGHGVEDSKADQAANEWGRSGKDPNHFRPSGLPDKY) is disordered.

This sequence belongs to the SAA family. As to quaternary structure, apolipoprotein of the HDL complex. As to expression, expressed by the liver; secreted in plasma.

The protein resides in the secreted. Functionally, major acute phase reactant. The sequence is that of Serum amyloid A-2 protein (SAA2P0DJI9) from Neovison vison (American mink).